Consider the following 199-residue polypeptide: Recombination protein RecR (199 aa).

Residues 58-73 (CQRCFHLSSEDLCNIC) form a C4-type zinc finger. One can recognise a Toprim domain in the interval 81–175 (QTICVVADPR…RVTRIAFGLP (95 aa)).

It belongs to the RecR family.

Functionally, may play a role in DNA repair. It seems to be involved in an RecBC-independent recombinational process of DNA repair. It may act with RecF and RecO. The chain is Recombination protein RecR from Synechococcus elongatus (strain ATCC 33912 / PCC 7942 / FACHB-805) (Anacystis nidulans R2).